A 478-amino-acid chain; its full sequence is ATP synthase subunit beta (478 aa).

160–167 (GGAGVGKT) lines the ATP pocket.

Belongs to the ATPase alpha/beta chains family. As to quaternary structure, F-type ATPases have 2 components, CF(1) - the catalytic core - and CF(0) - the membrane proton channel. CF(1) has five subunits: alpha(3), beta(3), gamma(1), delta(1), epsilon(1). CF(0) has three main subunits: a(1), b(2) and c(9-12). The alpha and beta chains form an alternating ring which encloses part of the gamma chain. CF(1) is attached to CF(0) by a central stalk formed by the gamma and epsilon chains, while a peripheral stalk is formed by the delta and b chains.

The protein resides in the cell inner membrane. It catalyses the reaction ATP + H2O + 4 H(+)(in) = ADP + phosphate + 5 H(+)(out). Produces ATP from ADP in the presence of a proton gradient across the membrane. The catalytic sites are hosted primarily by the beta subunits. In Orientia tsutsugamushi (strain Ikeda) (Rickettsia tsutsugamushi), this protein is ATP synthase subunit beta.